A 228-amino-acid chain; its full sequence is Prolactin (228 aa).

Positions 1 to 29 are cleaved as a signal peptide; sequence MGTKRSSLKGSLLLLLLMSSLFLFKSVES. A disulfide bridge links cysteine 33 with cysteine 40. Residues serine 55, serine 63, and serine 119 each carry the phosphoserine modification. 2 disulfides stabilise this stretch: cysteine 87-cysteine 203 and cysteine 220-cysteine 228.

Belongs to the somatotropin/prolactin family. In terms of assembly, interacts with PRLR.

It localises to the secreted. In terms of biological role, prolactin acts primarily on the mammary gland by promoting lactation, mammogenesis, mitogenesis and osmoregulation. The polypeptide is Prolactin (PRL) (Trichosurus vulpecula (Brush-tailed possum)).